The sequence spans 422 residues: UDP-N-acetylglucosamine 1-carboxyvinyltransferase (422 aa).

22 to 23 serves as a coordination point for phosphoenolpyruvate; that stretch reads KN. Arginine 93 is a binding site for UDP-N-acetyl-alpha-D-glucosamine. The Proton donor role is filled by cysteine 117. Residue cysteine 117 is modified to 2-(S-cysteinyl)pyruvic acid O-phosphothioketal. Residues 122–126, aspartate 308, and leucine 330 each bind UDP-N-acetyl-alpha-D-glucosamine; that span reads RPVDL.

It belongs to the EPSP synthase family. MurA subfamily.

The protein resides in the cytoplasm. The enzyme catalyses phosphoenolpyruvate + UDP-N-acetyl-alpha-D-glucosamine = UDP-N-acetyl-3-O-(1-carboxyvinyl)-alpha-D-glucosamine + phosphate. The protein operates within cell wall biogenesis; peptidoglycan biosynthesis. Cell wall formation. Adds enolpyruvyl to UDP-N-acetylglucosamine. The polypeptide is UDP-N-acetylglucosamine 1-carboxyvinyltransferase (Helicobacter pylori (strain J99 / ATCC 700824) (Campylobacter pylori J99)).